A 147-amino-acid polypeptide reads, in one-letter code: Large ribosomal subunit protein bL9 (147 aa).

This sequence belongs to the bacterial ribosomal protein bL9 family.

Binds to the 23S rRNA. This chain is Large ribosomal subunit protein bL9, found in Clostridium novyi (strain NT).